The primary structure comprises 196 residues: dTTP/UTP pyrophosphatase (196 aa).

Asp72 serves as the catalytic Proton acceptor.

Belongs to the Maf family. YhdE subfamily. Requires a divalent metal cation as cofactor.

The protein localises to the cytoplasm. The enzyme catalyses dTTP + H2O = dTMP + diphosphate + H(+). The catalysed reaction is UTP + H2O = UMP + diphosphate + H(+). In terms of biological role, nucleoside triphosphate pyrophosphatase that hydrolyzes dTTP and UTP. May have a dual role in cell division arrest and in preventing the incorporation of modified nucleotides into cellular nucleic acids. This Chlamydia felis (strain Fe/C-56) (Chlamydophila felis) protein is dTTP/UTP pyrophosphatase.